Consider the following 358-residue polypeptide: Ganglioside-induced differentiation-associated protein 1 (358 aa).

Residues 24-105 (VKLILYHWTH…YLEQTFLDER (82 aa)) form the GST N-terminal domain. Glycyl lysine isopeptide (Lys-Gly) (interchain with G-Cter in ubiquitin) cross-links involve residues lysine 50, lysine 172, lysine 173, lysine 188, and lysine 190. In terms of domain architecture, GST C-terminal spans 153–309 (PAYATTRIRS…LISAVLPTAF (157 aa)). Lysine 203 bears the N6-acetyllysine; alternate mark. Lysine 203 participates in a covalent cross-link: Glycyl lysine isopeptide (Lys-Gly) (interchain with G-Cter in ubiquitin); alternate. Glycyl lysine isopeptide (Lys-Gly) (interchain with G-Cter in ubiquitin) cross-links involve residues lysine 206, lysine 207, and lysine 214. The next 2 membrane-spanning stretches (helical) occupy residues 292–312 (VLGH…FRVA) and 320–340 (LGTT…FMLF). The required for mitochondrial localization stretch occupies residues 320 to 358 (LGTTLVVGLLAGVGYFAFMLFRKRLGSMILAFRPRPNYF).

It belongs to the GST superfamily. Homodimer. In terms of processing, ubiquitinated by PRKN during mitophagy, leading to its degradation and enhancement of mitophagy. Deubiquitinated by USP30. As to expression, highly expressed in whole brain and spinal cord. Predominant expression in central tissues of the nervous system not only in neurons but also in Schwann cells.

The protein localises to the mitochondrion outer membrane. Its subcellular location is the cytoplasm. Its function is as follows. Regulates the mitochondrial network by promoting mitochondrial fission. The sequence is that of Ganglioside-induced differentiation-associated protein 1 (GDAP1) from Homo sapiens (Human).